The primary structure comprises 461 residues: uncharacterized protein (461 aa).

This is an uncharacterized protein from Saccharomyces cerevisiae (strain ATCC 204508 / S288c) (Baker's yeast).